Reading from the N-terminus, the 57-residue chain is uncharacterized protein (57 aa).

An N-terminal signal peptide occupies residues 1–20; that stretch reads MKKLALILFMGTLVSFYADA.

This is an uncharacterized protein from Escherichia coli (strain K12).